A 962-amino-acid polypeptide reads, in one-letter code: Protein kinase ORF73 (962 aa).

Disordered regions lie at residues 1–28 (MADRTPKRSADGLIHDAKPSKVTKNDRP) and 62–152 (STPA…RATT). Acidic residues predominate over residues 81–90 (DSDDDDEEDN). Residues 143–152 (YDTTGRRATT) show a composition bias toward polar residues. One can recognise a Protein kinase domain in the interval 301–595 (LRAAPVLGKG…ASDLLKSPRY (295 aa)). ATP-binding positions include 307 to 315 (LGKGYFGTV) and K324. The Proton acceptor role is filled by D434.

The protein belongs to the protein kinase superfamily. Ser/Thr protein kinase family.

It catalyses the reaction L-seryl-[protein] + ATP = O-phospho-L-seryl-[protein] + ADP + H(+). The catalysed reaction is L-threonyl-[protein] + ATP = O-phospho-L-threonyl-[protein] + ADP + H(+). The chain is Protein kinase ORF73 (ORF73) from Ictaluridae (bullhead catfishes).